Reading from the N-terminus, the 310-residue chain is Probable deoxyhypusine synthase (310 aa).

The Nucleophile role is filled by Lys280.

The protein belongs to the deoxyhypusine synthase family. The cofactor is NAD(+).

The catalysed reaction is [eIF5A protein]-L-lysine + spermidine = [eIF5A protein]-deoxyhypusine + propane-1,3-diamine. The protein operates within protein modification; eIF5A hypusination. Catalyzes the NAD-dependent oxidative cleavage of spermidine and the subsequent transfer of the butylamine moiety of spermidine to the epsilon-amino group of a specific lysine residue of the eIF-5A precursor protein to form the intermediate deoxyhypusine residue. The protein is Probable deoxyhypusine synthase (dys) of Aeropyrum pernix (strain ATCC 700893 / DSM 11879 / JCM 9820 / NBRC 100138 / K1).